The following is a 382-amino-acid chain: Small ribosomal subunit protein mS35 (382 aa).

Residues 363–375 are compositionally biased toward gly residues; the sequence is GRGGKALPGGKGG. Residues 363 to 382 are disordered; that stretch reads GRGGKALPGGKGGKMQRSKR.

It belongs to the mitochondrion-specific ribosomal protein mS35 family. As to quaternary structure, component of the mitochondrial small ribosomal subunit (mt-SSU). Mature N.crassa 74S mitochondrial ribosomes consist of a small (37S) and a large (54S) subunit. The 37S small subunit contains a 16S ribosomal RNA (16S mt-rRNA) and 32 different proteins. The 54S large subunit contains a 23S rRNA (23S mt-rRNA) and 42 different proteins.

The protein localises to the mitochondrion. Functionally, component of the mitochondrial ribosome (mitoribosome), a dedicated translation machinery responsible for the synthesis of mitochondrial genome-encoded proteins, including at least some of the essential transmembrane subunits of the mitochondrial respiratory chain. The mitoribosomes are attached to the mitochondrial inner membrane and translation products are cotranslationally integrated into the membrane. The polypeptide is Small ribosomal subunit protein mS35 (rsm24) (Neurospora crassa (strain ATCC 24698 / 74-OR23-1A / CBS 708.71 / DSM 1257 / FGSC 987)).